A 90-amino-acid chain; its full sequence is MSSGGLLLLLGLLTLWAELTPVSGQDRPKYCDLPADSGPCRARKRHFYYNSRSNQCEEFTYGGCRGNENNFETKDKCHYTCVAPPRRRPL.

An N-terminal signal peptide occupies residues 1–24; the sequence is MSSGGLLLLLGLLTLWAELTPVSG. Gln-25 bears the Pyrrolidone carboxylic acid mark. Positions 31–81 constitute a BPTI/Kunitz inhibitor domain; that stretch reads CDLPADSGPCRARKRHFYYNSRSNQCEEFTYGGCRGNENNFETKDKCHYTC. Cystine bridges form between Cys-31-Cys-81, Cys-40-Cys-64, and Cys-56-Cys-77.

The protein belongs to the venom Kunitz-type family. Expressed by the venom gland.

Its subcellular location is the secreted. Its function is as follows. Serine protease inhibitor. The chain is Kunitz-type serine protease inhibitor kunitoxin-Tel1 from Telescopus dhara (Egyptian catsnake).